The following is a 702-amino-acid chain: MHWILALSLLLLLWLLVASPRLAWLKAGLLSLLLLLLSAWGLVDRLSGDGINAATLYHLRADMDGAGVSDFSGYIAVFIGMVLLSLSPLMLLRVRRFRRPRGGGAVFGAFVVMLLVSMAVSPVYRDGKRLYYQLRPVDYATVVPEYQVPQQPLQKRKNIVWIYGESLERTYFDEATFPGLMPNLRQLATEAVDVRNLTSTEGSGWTIAGMVASMCGVPLTTAPGDENSMGRMGLFLPEARCLGDYLKDQGYRNHYVGGADASFAGKGSFLASHGFDVVHDVNYFHDKGVAPKHFSAWGVHDDVLLDDAWESFQTLSRAGQPFMLTTLTMDTHHPAGHLPLACKNQRYESPLGDIGLLHAIKCSDRLIGELVTRIRNSRYGRNTIIVIASDHLAMPNDLSDVLAKQKRENLLLFLGKDIPPQQVVRRAGSTLDSGATLLQLLEPGMRTLGFGRSLLANDAPPSASVAASRDSGRDYPRYLAYARTLWTGRSTRMLRVNGNGDVVVGVQQVRPPVLLEYDDDTNLKTVYLENTSRQFDRTHSDGTLAYVDRCTAFEDGSADGDWCALVVDRNQHMKLYRDPDLTRGIAVDAPLDVTPQAPRPRVRQPIMLTQAARKTEAGRYMLELYAKRRPTRAFWVEAVSSERKVVLAQQWVVPDASGRIRMPVGLEHAVEDLGIRAWLDYTEEVSVDDLALVKDTAVADRS.

A run of 3 helical transmembrane segments spans residues histidine 2–leucine 22, phenylalanine 71–leucine 91, and glycine 103–valine 123.

This sequence belongs to the OpgB family.

The protein localises to the cell inner membrane. The catalysed reaction is a phosphatidylglycerol + a membrane-derived-oligosaccharide D-glucose = a 1,2-diacyl-sn-glycerol + a membrane-derived-oligosaccharide 6-(glycerophospho)-D-glucose.. It participates in glycan metabolism; osmoregulated periplasmic glucan (OPG) biosynthesis. In terms of biological role, transfers a phosphoglycerol residue from phosphatidylglycerol to the membrane-bound nascent glucan backbones. The chain is Phosphoglycerol transferase I from Xanthomonas campestris pv. campestris (strain B100).